The chain runs to 251 residues: Triosephosphate isomerase (251 aa).

9–11 is a binding site for substrate; that stretch reads NWK. The Electrophile role is filled by His96. Glu166 serves as the catalytic Proton acceptor. Substrate-binding positions include Gly172, Ser212, and 233–234; that span reads GG.

It belongs to the triosephosphate isomerase family. Homodimer.

The protein resides in the cytoplasm. The enzyme catalyses D-glyceraldehyde 3-phosphate = dihydroxyacetone phosphate. Its pathway is carbohydrate biosynthesis; gluconeogenesis. It functions in the pathway carbohydrate degradation; glycolysis; D-glyceraldehyde 3-phosphate from glycerone phosphate: step 1/1. In terms of biological role, involved in the gluconeogenesis. Catalyzes stereospecifically the conversion of dihydroxyacetone phosphate (DHAP) to D-glyceraldehyde-3-phosphate (G3P). The chain is Triosephosphate isomerase from Pelodictyon phaeoclathratiforme (strain DSM 5477 / BU-1).